Here is a 699-residue protein sequence, read N- to C-terminus: Receptor-type tyrosine-protein phosphatase epsilon (699 aa).

Positions 1–22 (MEPFCPLLLASFSLSLATAGQG) are cleaved as a signal peptide. Residues 20 to 36 (GQGNDTTPTESNWTSTT) are compositionally biased toward low complexity. The disordered stretch occupies residues 20–41 (GQGNDTTPTESNWTSTTAGPPD). Residues N23 and N31 are each glycosylated (N-linked (GlcNAc...) asparagine). The Extracellular portion of the chain corresponds to 23–47 (NDTTPTESNWTSTTAGPPDPGTSQP). A helical transmembrane segment spans residues 48–68 (LLTWLLLPLLLLLFLLAAYFF). The Cytoplasmic portion of the chain corresponds to 69–699 (RFRKQRKAVV…DIFSDYANFK (631 aa)). Tyrosine-protein phosphatase domains follow at residues 134–393 (FREE…LLEY) and 425–688 (LEEE…VQDF). Substrate is bound by residues D302, 334–340 (CSAGVGR), and Q378. C334 acts as the Phosphocysteine intermediate in catalysis. The active-site Phosphocysteine intermediate is the C629. Phosphotyrosine is present on Y695.

Belongs to the protein-tyrosine phosphatase family. Receptor class 4 subfamily. Monomer. Isoform 2: Homodimer. Can form oligomers. Dimerization is increased by oxidative stress and decreased by EGFR. Isoform 2 interacts with GRB2. A catalytically active cytoplasmic form (p65) is produced by proteolytic cleavage of either isoform 1, isoform 2 or isoform 3. Post-translationally, isoform 1 and isoform 2 are phosphorylated on tyrosine residues by tyrosine kinase Neu. In terms of processing, N-glycosylated. In terms of tissue distribution, isoform 1 is highly expressed in the brain, lung, spleen and testis. Isoform 2 is highly expressed in thymus, spleen and lung. Isoform 1 and isoform 2 are expressed in primary hepatocytes.

Its subcellular location is the cell membrane. It is found in the cytoplasm. The catalysed reaction is O-phospho-L-tyrosyl-[protein] + H2O = L-tyrosyl-[protein] + phosphate. Isoform 1 plays a critical role in signaling transduction pathways and phosphoprotein network topology in red blood cells. May play a role in osteoclast formation and function. Acts as a negative regulator of insulin receptor (IR) signaling and is involved in insulin-induced glucose metabolism mainly through direct dephosphorylation and inactivation of IR in hepatocytes and liver. Its function is as follows. Isoform 2 acts as a negative regulator of insulin receptor (IR) signaling in skeletal muscle. Regulates insulin-induced tyrosine phosphorylation of insulin receptor (IR) and insulin receptor substrate 1 (IRS-1), phosphorylation of protein kinase B and glycogen synthase kinase-3 and insulin induced stimulation of glucose uptake. In terms of biological role, isoform 1 and isoform 2 act as a negative regulator of FceRI-mediated signal transduction leading to cytokine production and degranulation, most likely by acting at the level of SYK to affect downstream events such as phosphorylation of SLP76 and LAT and mobilization of Ca(2+). The chain is Receptor-type tyrosine-protein phosphatase epsilon (Ptpre) from Rattus norvegicus (Rat).